A 550-amino-acid chain; its full sequence is MEIQRPVINLMVLHSQHDKSDNLSRRESLAGKSKWRTSLSRSSSSSSSNNNSPTKTEIPAEFLCPISGSLMADPIIVSSGHSYERACVIACKTLGFTPTPPPDFSTVIPNLALKSAIHSWCERRCFPPPKPLNSAAAEKLILALMEKKPQRRKVSVSEKELIQAIRDKPSVRLNHAATELDRRPNYFNSSSDESIASSSRTLQLTTKPSCFSSPSSGEIESLEPNLTPEEEALLTKLKSNRISEIEEALISIRRITRIDESSRISLCTTRVISALKSLIVSRYATVQVNVTAVLVNLSLEKSNKVKIVRSGIVPPLIDVLKCGSVEAQEHSAGVIFSLALEDENKTAIGVLGGLEPLLHLIRVGTELTRHDSALALYHLSLVQSNRGKLVKLGAVQMLLGMVSLGQMIGRVLLILCNMASCPVSRPALLDSGGVECMVGVLRRDREVNESTRESCVAVLYGLSHDGGLRFKGLAMAANAVEELVKVERSGRERAKQKARRVLEVLRAKIEDDDLVENEEIDWEELLNSGDVSRSRCRLGGEKSCVNSAEF.

Over residues 19–29 (KSDNLSRRESL) the composition is skewed to basic and acidic residues. The tract at residues 19–55 (KSDNLSRRESLAGKSKWRTSLSRSSSSSSSNNNSPTK) is disordered. Residues 38 to 52 (SLSRSSSSSSSNNNS) are compositionally biased toward low complexity. A U-box domain is found at 57–127 (EIPAEFLCPI…HSWCERRCFP (71 aa)). ARM repeat units follow at residues 260–299 (ESSR…NLSL), 301–340 (KSNK…SLAL), 342–381 (DENK…HLSL), 383–420 (QSNR…NMAS), and 422–464 (PVSR…GLSH).

The catalysed reaction is S-ubiquitinyl-[E2 ubiquitin-conjugating enzyme]-L-cysteine + [acceptor protein]-L-lysine = [E2 ubiquitin-conjugating enzyme]-L-cysteine + N(6)-ubiquitinyl-[acceptor protein]-L-lysine.. The protein operates within protein modification; protein ubiquitination. Functions as an E3 ubiquitin ligase. This chain is U-box domain-containing protein 40 (PUB40), found in Arabidopsis thaliana (Mouse-ear cress).